The primary structure comprises 200 residues: Urease accessory protein UreG (200 aa).

A GTP-binding site is contributed by 11 to 18 (GPVGSGKT).

It belongs to the SIMIBI class G3E GTPase family. UreG subfamily. Homodimer. UreD, UreF and UreG form a complex that acts as a GTP-hydrolysis-dependent molecular chaperone, activating the urease apoprotein by helping to assemble the nickel containing metallocenter of UreC. The UreE protein probably delivers the nickel.

It localises to the cytoplasm. Its function is as follows. Facilitates the functional incorporation of the urease nickel metallocenter. This process requires GTP hydrolysis, probably effectuated by UreG. The sequence is that of Urease accessory protein UreG from Thermosynechococcus vestitus (strain NIES-2133 / IAM M-273 / BP-1).